The sequence spans 107 residues: Integration host factor subunit alpha (107 aa).

The protein belongs to the bacterial histone-like protein family. Heterodimer of an alpha and a beta chain.

In terms of biological role, this protein is one of the two subunits of integration host factor, a specific DNA-binding protein that functions in genetic recombination as well as in transcriptional and translational control. This Brucella abortus (strain S19) protein is Integration host factor subunit alpha.